A 621-amino-acid chain; its full sequence is KIF-binding protein (621 aa).

At S178 the chain carries Phosphoserine.

Belongs to the KIF-binding protein family. As to quaternary structure, interacts with KIF1B; positively regulates KIF1B microtubule motor activity. Interacts with STMN2.

It is found in the cytoplasm. It localises to the cytoskeleton. Its function is as follows. Activator of KIF1B plus-end-directed microtubule motor activity. Required for organization of axonal microtubules, and axonal outgrowth and maintenance during peripheral and central nervous system development. This is KIF-binding protein (KIFBP) from Bos taurus (Bovine).